A 378-amino-acid polypeptide reads, in one-letter code: MLWTLMSNPILIGQSTHYYDSRSSSLRQRNQPKQLLLLLLRTIIVVSVITFAAIIGCWVFLSHGTTTTNPPQQCSTPAVRKEWRSLSPSAQAKYISAVQCLMYLPSVHKEGTTLYDDFVFGHSKTGSYSHYAASFLPWHRMYLHVYERALRDHCGYSESLPYWDWTLDSHHLSASPIWDPVTGFGGDGNPGGAETLHGGRCVVDGPFANSTRAWRALSEGHNHDVEYGPHCLSRGFIINNDDRTTLDMLHGLVSPSRVAQTLDKPDYIAFFEDFESGPHNAIPQFIRGDFLTFSAPNDPVFYLHHANVDRLWWLWQQRDPVGRLYQVRGPAKDFRYHEGHEVSEGSIEDVMPMGGLAEDIKMKSVMDTRAGFLCYEYE.

The chain crosses the membrane as a helical span at residues 42-62 (TIIVVSVITFAAIIGCWVFLS). Cu cation contacts are provided by histidine 130 and histidine 139. A glycan (N-linked (GlcNAc...) asparagine) is linked at asparagine 209. Cu cation-binding residues include histidine 279 and histidine 305.

It belongs to the tyrosinase family. Cu(2+) serves as cofactor.

Its subcellular location is the membrane. The protein operates within mycotoxin biosynthesis. Functionally, tyrosinase-like protein; part of the gene cluster that mediates the biosynthesis of the phomopsins, a group of hexapeptide mycotoxins which infects lupins and causes lupinosis disease in livestock. The pathway starts with the processing of the precursor phomA' by several endopeptidases including kexin proteases as well as the cluster-specific S41 family peptidase phomP1 and the oligopeptidase phomG' to produce 10 identical copies of the hexapeptide Tyr-Val-Ile-Pro-Ile-Asp. After being excised from the precursor peptide, the core peptides are cyclized and modified post-translationally by enzymes encoded within the gene cluster. The timing and order of proteolysis of the phomA' precursor and PTMs are still unknown. Two tyrosinase-like enzymes, phomQ1' and phomQ2, catalyze the chlorination and hydroxylation of Tyr, respectively. PhomYb, is proposed to be involved in the construction of the macrocyclic structure. The other 4 ustYa family proteins may be involved in PTMs that generate the unique structure of phomopsin A. PhomYa' is required for the hydroxylation of C-beta of Tyr. PhomYc', phomYd', and phomYe are responsible for the biosynthesis of 2,3-dehydroisoleucine (dIle), 2,3-dehydroaspartic acid (dAsp), and 3,4-dehydroproline (dPro), respectively. While dIle formation by phomYc' is indispensable for the installation of dAsp by phomYd', the order of the other PTMs have not been elucidated yet. Most of the biosynthetic enzymes likely have broad substrate specificity, and thus, there might be a metabolic grid from a precursor to phomopsin A. The enzyme(s) responsible for the biosynthesis of 3,4-dehydrovaline (dVal) have also not been identified yet. Finally, phomM' acts as an S-adenosylmethionine-dependent alpha-N-methyltransferase that catalyzes two successive N-methylation reactions, converting N-desmethyl-phomopsin A to phomopsin A and phomopsin A further to an N,N-dimethylated congener called phomopsin E. In Diaporthe leptostromiformis (Lupinosis disease fungus), this protein is Tyrosinase-like protein phomQ1'.